The primary structure comprises 113 residues: uncharacterized protein (113 aa).

Disordered regions lie at residues 1–22 and 90–113; these read MGEH…PLAQ and DGRH…SDDL. The span at 90 to 99 shows a compositional bias: basic and acidic residues; sequence DGRHTTESSF. Over residues 100-113 the composition is skewed to low complexity; the sequence is EHSSPSRSPQSDDL.

This is an uncharacterized protein from Mycobacterium tuberculosis (strain CDC 1551 / Oshkosh).